We begin with the raw amino-acid sequence, 707 residues long: Methionine--tRNA ligase (707 aa).

The short motif at 13-23 (PYANGNFHIGH) is the 'HIGH' region element. C147, C150, C160, and C163 together coordinate Zn(2+). The short motif at 344 to 348 (KMSKS) is the 'KMSKS' region element. An ATP-binding site is contributed by K347. Positions 601-707 (DFAKVDLRIA…PGATPGMRIH (107 aa)) constitute a tRNA-binding domain.

The protein belongs to the class-I aminoacyl-tRNA synthetase family. MetG type 1 subfamily. As to quaternary structure, homodimer. The cofactor is Zn(2+).

It is found in the cytoplasm. The enzyme catalyses tRNA(Met) + L-methionine + ATP = L-methionyl-tRNA(Met) + AMP + diphosphate. Is required not only for elongation of protein synthesis but also for the initiation of all mRNA translation through initiator tRNA(fMet) aminoacylation. The polypeptide is Methionine--tRNA ligase (Polaromonas naphthalenivorans (strain CJ2)).